A 133-amino-acid polypeptide reads, in one-letter code: ATP synthase epsilon chain, chloroplastic (133 aa).

The protein belongs to the ATPase epsilon chain family. F-type ATPases have 2 components, CF(1) - the catalytic core - and CF(0) - the membrane proton channel. CF(1) has five subunits: alpha(3), beta(3), gamma(1), delta(1), epsilon(1). CF(0) has three main subunits: a, b and c.

The protein resides in the plastid. The protein localises to the chloroplast thylakoid membrane. Its function is as follows. Produces ATP from ADP in the presence of a proton gradient across the membrane. This Nephroselmis olivacea (Green alga) protein is ATP synthase epsilon chain, chloroplastic.